The following is a 699-amino-acid chain: Ciliated left-right organizer metallopeptidase (699 aa).

Residues Met1–His18 form the signal peptide. Over Glu19–Glu663 the chain is Extracellular. His238 is a Zn(2+) binding site. Glu239 is a catalytic residue. His242 and His318 together coordinate Zn(2+). The chain crosses the membrane as a helical span at residues Leu664 to Leu684. Topologically, residues Ala685–Thr699 are cytoplasmic.

Belongs to the peptidase M8 family. Zn(2+) is required as a cofactor. Specifically expressed in ciliated left-right organizer.

The protein localises to the membrane. In terms of biological role, putative metalloproteinase that plays a role in left-right patterning process. In Mus musculus (Mouse), this protein is Ciliated left-right organizer metallopeptidase.